The chain runs to 447 residues: Tubulin beta chain (447 aa).

Residues Q11, E69, S138, G142, T143, G144, N204, and N226 each coordinate GTP. E69 contributes to the Mg(2+) binding site. The segment at Q424–E447 is disordered. Residues E432–E447 show a composition bias toward acidic residues.

Belongs to the tubulin family. In terms of assembly, dimer of alpha and beta chains. A typical microtubule is a hollow water-filled tube with an outer diameter of 25 nm and an inner diameter of 15 nM. Alpha-beta heterodimers associate head-to-tail to form protofilaments running lengthwise along the microtubule wall with the beta-tubulin subunit facing the microtubule plus end conferring a structural polarity. Microtubules usually have 13 protofilaments but different protofilament numbers can be found in some organisms and specialized cells. The cofactor is Mg(2+).

Its subcellular location is the cytoplasm. It localises to the cytoskeleton. Tubulin is the major constituent of microtubules, a cylinder consisting of laterally associated linear protofilaments composed of alpha- and beta-tubulin heterodimers. Microtubules grow by the addition of GTP-tubulin dimers to the microtubule end, where a stabilizing cap forms. Below the cap, tubulin dimers are in GDP-bound state, owing to GTPase activity of alpha-tubulin. This is Tubulin beta chain from Uncinula necator (Grape powdery mildew).